Consider the following 964-residue polypeptide: Translation initiation factor IF-2 (964 aa).

The tract at residues Ala35 to Met353 is disordered. The span at Lys64 to Thr108 shows a compositional bias: low complexity. A compositionally biased stretch (pro residues) spans Pro124 to Ala133. Residues Ala145–Thr155 show a composition bias toward basic and acidic residues. Pro residues predominate over residues Asn166–Lys178. Over residues Pro220–Asp233 the composition is skewed to low complexity. Composition is skewed to gly residues over residues Gly234–Pro252 and Gly290–Gly333. Residues Arg337–Lys346 are compositionally biased toward basic residues. Positions Lys459–Asp631 constitute a tr-type G domain. A G1 region spans residues Gly468–Thr475. Gly468–Thr475 is a binding site for GTP. Residues Gly493–Gly497 are G2. Residues Asp518 to Gly521 form a G3 region. GTP contacts are provided by residues Asp518–His522 and Asn572–Asp575. The segment at Asn572 to Asp575 is G4. The segment at Ser608–Lys610 is G5.

The protein belongs to the TRAFAC class translation factor GTPase superfamily. Classic translation factor GTPase family. IF-2 subfamily.

The protein resides in the cytoplasm. In terms of biological role, one of the essential components for the initiation of protein synthesis. Protects formylmethionyl-tRNA from spontaneous hydrolysis and promotes its binding to the 30S ribosomal subunits. Also involved in the hydrolysis of GTP during the formation of the 70S ribosomal complex. The chain is Translation initiation factor IF-2 from Corynebacterium efficiens (strain DSM 44549 / YS-314 / AJ 12310 / JCM 11189 / NBRC 100395).